The following is a 593-amino-acid chain: NADH-quinone oxidoreductase subunit C/D (593 aa).

The segment at 1–184 (MTADTAVSIP…DPFSLTLAKQ (184 aa)) is NADH dehydrogenase I subunit C. The NADH dehydrogenase I subunit D stretch occupies residues 208-593 (DYMFLNLGPN…IDFVMADVDR (386 aa)).

In the N-terminal section; belongs to the complex I 30 kDa subunit family. The protein in the C-terminal section; belongs to the complex I 49 kDa subunit family. In terms of assembly, NDH-1 is composed of 13 different subunits. Subunits NuoB, CD, E, F, and G constitute the peripheral sector of the complex.

The protein localises to the cell inner membrane. It catalyses the reaction a quinone + NADH + 5 H(+)(in) = a quinol + NAD(+) + 4 H(+)(out). In terms of biological role, NDH-1 shuttles electrons from NADH, via FMN and iron-sulfur (Fe-S) centers, to quinones in the respiratory chain. The immediate electron acceptor for the enzyme in this species is believed to be ubiquinone. Couples the redox reaction to proton translocation (for every two electrons transferred, four hydrogen ions are translocated across the cytoplasmic membrane), and thus conserves the redox energy in a proton gradient. The chain is NADH-quinone oxidoreductase subunit C/D from Ectopseudomonas mendocina (strain ymp) (Pseudomonas mendocina).